Consider the following 62-residue polypeptide: Potassium channel toxin kappa-KTx 1.4 (62 aa).

The signal sequence occupies residues 1 to 26 (MKSCLINVSLLILLLLPILGYASVNA). Positions 27 to 38 (ESIDGENDFEEE) are excised as a propeptide. Intrachain disulfides connect Cys-43/Cys-61 and Cys-47/Cys-57.

The protein belongs to the short scorpion toxin superfamily. Potassium channel inhibitor kappa-KTx family. Kappa-KTx 1 subfamily. Expressed by the venom gland.

It localises to the secreted. In terms of biological role, shows structural homology with WaTx suggesting that it acts as a cell-penetrating peptide (CPP) with defensive purpose that induces pain by specifically activating mammalian sensory neuron TRPA1 channels. Has no effect on the voltage-gated potassium channels tested. This is Potassium channel toxin kappa-KTx 1.4 from Heterometrus petersii (Asian forest scorpion).